The sequence spans 247 residues: MSVTMREMLEAGCHFGHQTRFWNPKMAPFIFGHRNKIHIINLEKTLPMFQDALKYVRQLAANRGTIMFVGTKRQSREILAEEAGRAGMPYVDARWLGGMLTNFKTVKTSIKRLKDMEAAKEAGALDTMSKKEALMFEREMIKLEKSIGGIKEMGGIPDAIFVVDVGYHKIAVTEANKLGIPVIGVVDTNHSPEGIDYVIPGNDDSSKAVALYVRGVADAILEGRANAVQEVVEAARGGDDFVEVQEG.

It belongs to the universal ribosomal protein uS2 family.

This Cupriavidus pinatubonensis (strain JMP 134 / LMG 1197) (Cupriavidus necator (strain JMP 134)) protein is Small ribosomal subunit protein uS2.